Consider the following 335-residue polypeptide: Mycobacterial beta-ketoacyl-[acyl-carrier-protein] synthase III (335 aa).

Active-site residues include C122 and H258. An ACP-binding region spans residues 259–263 (QANSR). Residue N289 is part of the active site.

Belongs to the thiolase-like superfamily. FabH family. As to quaternary structure, homodimer.

It localises to the cytoplasm. The catalysed reaction is malonyl-[ACP] + dodecanoyl-CoA + H(+) = 3-oxotetradecanoyl-[ACP] + CO2 + CoA. The protein operates within lipid metabolism; fatty acid biosynthesis. It participates in lipid metabolism; mycolic acid biosynthesis. Its function is as follows. Catalyzes the condensation reaction of fatty acid synthesis by the addition to an acyl acceptor of two carbons from malonyl-ACP. Catalyzes the first condensation reaction which initiates fatty acid synthesis and may therefore play a role in governing the total rate of fatty acid production. Possesses both acetoacetyl-ACP synthase and acetyl transacylase activities. Its substrate specificity determines the biosynthesis of branched-chain and/or straight-chain of fatty acids. The chain is Mycobacterial beta-ketoacyl-[acyl-carrier-protein] synthase III from Mycolicibacterium paratuberculosis (strain ATCC BAA-968 / K-10) (Mycobacterium paratuberculosis).